We begin with the raw amino-acid sequence, 228 residues long: MEIRQLKYFVAVAEAGGFGTAAQRMHISQPPLTRQIQALERDIGAKLFERTARGVELTAAGKVFLDDARQLLALVQRSSRRSQAAARGESGELKLVYFGTPVFETVPAFVRTFLATYPDATVAVSHMTKEAQLESLLSGVVDIGFGRFYPVTEGVSSWNIGTETLHVAAADPWDTRVSRARAVVDLLDVPLILYPRGDRPSFADKVVSIFRDRFKKSPGGLLTFSASC.

Residues Met-1 to Thr-58 form the HTH lysR-type domain. A DNA-binding region (H-T-H motif) is located at residues Phe-18–Gln-37.

Belongs to the LysR transcriptional regulatory family.

The protein localises to the cytoplasm. In terms of biological role, does not seem to be involved in the regulation of 3-chlorocatechol degradation. Does not activate the expression of its presumed target operon, tfdCDEF. The sequence is that of HTH-type transcriptional regulator TfdT (tfdT) from Cupriavidus pinatubonensis (strain JMP 134 / LMG 1197) (Cupriavidus necator (strain JMP 134)).